A 574-amino-acid polypeptide reads, in one-letter code: ATP synthase subunit beta, mitochondrial (574 aa).

The N-terminal 26 residues, 1 to 26 (MLSSVRLAALRAGKTNSVFQAVRAFA), are a transit peptide targeting the mitochondrion. 183–190 (GGAGVGKT) is an ATP binding site.

This sequence belongs to the ATPase alpha/beta chains family. As to quaternary structure, F-type ATPases have 2 components, CF(1) - the catalytic core - and CF(0) - the membrane proton channel. CF(1) has five subunits: alpha(3), beta(3), gamma(1), delta(1), epsilon(1). CF(0) has three main subunits: a, b and c.

It localises to the mitochondrion. The protein resides in the mitochondrion inner membrane. It carries out the reaction ATP + H2O + 4 H(+)(in) = ADP + phosphate + 5 H(+)(out). Mitochondrial membrane ATP synthase (F(1)F(0) ATP synthase or Complex V) produces ATP from ADP in the presence of a proton gradient across the membrane which is generated by electron transport complexes of the respiratory chain. F-type ATPases consist of two structural domains, F(1) - containing the extramembraneous catalytic core, and F(0) - containing the membrane proton channel, linked together by a central stalk and a peripheral stalk. During catalysis, ATP synthesis in the catalytic domain of F(1) is coupled via a rotary mechanism of the central stalk subunits to proton translocation. Subunits alpha and beta form the catalytic core in F(1). Rotation of the central stalk against the surrounding alpha(3)beta(3) subunits leads to hydrolysis of ATP in three separate catalytic sites on the beta subunits. The polypeptide is ATP synthase subunit beta, mitochondrial (ATP2) (Chlamydomonas reinhardtii (Chlamydomonas smithii)).